The primary structure comprises 395 residues: NAD(P)H-quinone oxidoreductase subunit H (395 aa).

This sequence belongs to the complex I 49 kDa subunit family. As to quaternary structure, NDH-1 can be composed of about 15 different subunits; different subcomplexes with different compositions have been identified which probably have different functions.

Its subcellular location is the cellular thylakoid membrane. It carries out the reaction a plastoquinone + NADH + (n+1) H(+)(in) = a plastoquinol + NAD(+) + n H(+)(out). The catalysed reaction is a plastoquinone + NADPH + (n+1) H(+)(in) = a plastoquinol + NADP(+) + n H(+)(out). NDH-1 shuttles electrons from an unknown electron donor, via FMN and iron-sulfur (Fe-S) centers, to quinones in the respiratory and/or the photosynthetic chain. The immediate electron acceptor for the enzyme in this species is believed to be plastoquinone. Couples the redox reaction to proton translocation, and thus conserves the redox energy in a proton gradient. Cyanobacterial NDH-1 also plays a role in inorganic carbon-concentration. This Prochlorococcus marinus (strain MIT 9312) protein is NAD(P)H-quinone oxidoreductase subunit H.